Reading from the N-terminus, the 333-residue chain is MSAADRLLEAWYRGHPALALLRPLEWLYRRVVQGKRARFLAGQGDIYRAPVPVLVVGNITVGGTGKTPLILFLIEHCRARGLKVGVVSRGYGATPPSLPWRVRADQSAAQAGDEPLLIVQRTGVPLMIDPDRSRAVRALLAEEPLDLILCDDGLQHYRLARDLELVLIDAARGLGNRRCLPAGPLREPAERLAEVDAVLSNGAETDSAEGYAFRLQPSALVNLVSGERLGLEHFPPGQAVHAVAGIGNPQRFFNTLEALNWRPVPHPFADHAQYDAAQLSFEPPLPLLMTEKDAVKCRAFAAADWWYLAVDAVPTPAFVDWLDKELARLIPGS.

ATP is bound at residue 60 to 67 (TVGGTGKT).

Belongs to the LpxK family.

The catalysed reaction is a lipid A disaccharide + ATP = a lipid IVA + ADP + H(+). It functions in the pathway glycolipid biosynthesis; lipid IV(A) biosynthesis; lipid IV(A) from (3R)-3-hydroxytetradecanoyl-[acyl-carrier-protein] and UDP-N-acetyl-alpha-D-glucosamine: step 6/6. Functionally, transfers the gamma-phosphate of ATP to the 4'-position of a tetraacyldisaccharide 1-phosphate intermediate (termed DS-1-P) to form tetraacyldisaccharide 1,4'-bis-phosphate (lipid IVA). This Ectopseudomonas mendocina (strain ymp) (Pseudomonas mendocina) protein is Tetraacyldisaccharide 4'-kinase.